A 272-amino-acid polypeptide reads, in one-letter code: Probable nitrilase C965.09 (272 aa).

Residues 3-244 form the CN hydrolase domain; the sequence is ANIACVQMAP…EGVISYTVDL (242 aa). Catalysis depends on glutamate 45, which acts as the Proton acceptor. Lysine 118 serves as the catalytic Proton donor. Cysteine 150 acts as the Nucleophile in catalysis.

Belongs to the carbon-nitrogen hydrolase superfamily.

It localises to the cytoplasm. The protein resides in the nucleus. The polypeptide is Probable nitrilase C965.09 (Schizosaccharomyces pombe (strain 972 / ATCC 24843) (Fission yeast)).